A 266-amino-acid polypeptide reads, in one-letter code: 3-deoxy-manno-octulosonate cytidylyltransferase (266 aa).

The protein belongs to the KdsB family.

It localises to the cytoplasm. The enzyme catalyses 3-deoxy-alpha-D-manno-oct-2-ulosonate + CTP = CMP-3-deoxy-beta-D-manno-octulosonate + diphosphate. It functions in the pathway nucleotide-sugar biosynthesis; CMP-3-deoxy-D-manno-octulosonate biosynthesis; CMP-3-deoxy-D-manno-octulosonate from 3-deoxy-D-manno-octulosonate and CTP: step 1/1. It participates in bacterial outer membrane biogenesis; lipopolysaccharide biosynthesis. In terms of biological role, activates KDO (a required 8-carbon sugar) for incorporation into bacterial lipopolysaccharide in Gram-negative bacteria. This Paraburkholderia xenovorans (strain LB400) protein is 3-deoxy-manno-octulosonate cytidylyltransferase.